A 205-amino-acid polypeptide reads, in one-letter code: Mitochondrial ATP-independent inner membrane protease subunit 2 (205 aa).

Residues Glu-59 and Arg-104 contribute to the active site.

This sequence belongs to the peptidase S26 family. IMP1 subfamily. As to quaternary structure, heterodimer of 2 subunits, IMP1A/B and IMP12.

It localises to the mitochondrion inner membrane. Functionally, catalyzes the removal of transit peptides required for the targeting of proteins from the mitochondrial matrix, across the inner membrane, into the inter-membrane space. The polypeptide is Mitochondrial ATP-independent inner membrane protease subunit 2 (Arabidopsis thaliana (Mouse-ear cress)).